Reading from the N-terminus, the 264-residue chain is Hemin import ATP-binding protein HmuV (264 aa).

Positions 10–246 (LQAQNLSYSI…HTLRKWYQAD (237 aa)) constitute an ABC transporter domain. Residue 42–49 (GPNGAGKS) participates in ATP binding.

This sequence belongs to the ABC transporter superfamily. Heme (hemin) importer (TC 3.A.1.14.5) family. The complex is composed of two ATP-binding proteins (HmuV), two transmembrane proteins (HmuU) and a solute-binding protein (HmuT).

It is found in the cell inner membrane. Part of the ABC transporter complex HmuTUV involved in hemin import. Responsible for energy coupling to the transport system. This Photorhabdus laumondii subsp. laumondii (strain DSM 15139 / CIP 105565 / TT01) (Photorhabdus luminescens subsp. laumondii) protein is Hemin import ATP-binding protein HmuV.